We begin with the raw amino-acid sequence, 238 residues long: Large ribosomal subunit protein uL3 (238 aa).

Gln157 is subject to N5-methylglutamine.

Belongs to the universal ribosomal protein uL3 family. As to quaternary structure, part of the 50S ribosomal subunit. Forms a cluster with proteins L14 and L19. Post-translationally, methylated by PrmB.

One of the primary rRNA binding proteins, it binds directly near the 3'-end of the 23S rRNA, where it nucleates assembly of the 50S subunit. This chain is Large ribosomal subunit protein uL3, found in Ruthia magnifica subsp. Calyptogena magnifica.